The sequence spans 421 residues: Solute carrier family 35 member F3 (421 aa).

Residues 25 to 53 (EGEERPREPPGPAEAQAPAGTEAGGRTSR) form a disordered region. Over residues 37–49 (AEAQAPAGTEAGG) the composition is skewed to low complexity. 10 helical membrane-spanning segments follow: residues 66–86 (VFWG…STQL), 98–118 (FTLT…YYAG), 149–169 (VFFT…YLYL), 179–199 (DVSV…WIVL), 208–228 (IVAA…DGFH), 232–252 (VIGI…KVLF), 266–286 (LFLS…PVIL), 305–325 (LCGF…GIAV), 326–346 (TYPT…AVVD), and 352–372 (IVFN…FLLL). A disordered region spans residues 394–421 (KEETAESSGDLGTGPQSRSRRARPSFAR). Residues 411-421 (RSRRARPSFAR) show a composition bias toward basic residues.

The protein belongs to the SLC35F solute transporter family.

It is found in the membrane. The enzyme catalyses thiamine(in) = thiamine(out). In terms of biological role, mediates thiamine transport. This is Solute carrier family 35 member F3 (Slc35f3) from Mus musculus (Mouse).